Here is a 107-residue protein sequence, read N- to C-terminus: Colipase (107 aa).

The first 17 residues, 1 to 17, serve as a signal peptide directing secretion; it reads MEKVLVLLLVALSVAYA. A propeptide spans 18-22 (enterostatin, activation peptide); the sequence is APGPR. Disulfide bonds link Cys-34–Cys-45, Cys-40–Cys-56, Cys-44–Cys-78, Cys-66–Cys-86, and Cys-80–Cys-104.

Belongs to the colipase family. Forms a 1:1 stoichiometric complex with pancreatic lipase. Expressed by the pancreas.

The protein localises to the secreted. Functionally, colipase is a cofactor of pancreatic lipase. It allows the lipase to anchor itself to the lipid-water interface. Without colipase the enzyme is washed off by bile salts, which have an inhibitory effect on the lipase. Enterostatin has a biological activity as a satiety signal. The sequence is that of Colipase (CLPS) from Oryctolagus cuniculus (Rabbit).